Reading from the N-terminus, the 262-residue chain is Diphthine synthase (262 aa).

S-adenosyl-L-methionine is bound by residues Leu-10, Asp-87, Val-90, 115–116 (SI), Leu-166, Ala-209, and His-234.

The protein belongs to the diphthine synthase family. Homodimer.

The enzyme catalyses 2-[(3S)-amino-3-carboxypropyl]-L-histidyl-[translation elongation factor 2] + 3 S-adenosyl-L-methionine = diphthine-[translation elongation factor 2] + 3 S-adenosyl-L-homocysteine + 3 H(+). It functions in the pathway protein modification; peptidyl-diphthamide biosynthesis. Functionally, S-adenosyl-L-methionine-dependent methyltransferase that catalyzes the trimethylation of the amino group of the modified target histidine residue in translation elongation factor 2 (EF-2), to form an intermediate called diphthine. The three successive methylation reactions represent the second step of diphthamide biosynthesis. The polypeptide is Diphthine synthase (Pyrococcus abyssi (strain GE5 / Orsay)).